Reading from the N-terminus, the 457-residue chain is MSQYVSRLGRRSPAASPRLRLNRKPRRVAMLSVHTSPLHQPGTGDAGGMNVYIVELAQRLAAINIEVEIFTRATTAALPPAVELAPGVLVRHVDAGPYEGLAKEELPAQLCAFTHGVMQAWAGHRPGHYDLVHSHYWLSGHVGWLAAQRWGAPLVHAMHTMAKVKNANLADGDTPEPAARVIGETQIVAASDRLIANTAEEADELVRHYAADPDKVAVVHPGVNLERFRPFPKGRVPGPGQHGNARAAARARLGLPQDALIPLFAGRIQPLKAPDILLRAVAVLLDERPELRSRIVVPVVGGPSGSGLAKPEGLQKLAARLGIADVVRFRPPVGQEQLADWFRAASVLVMPSYSESFGLVAIEAQAAGTPVLAAAVGGLPVAVRDGHTGRLVHGHDPAAYARVLRDFADNPDLTPRMGDAAARHAQSFGWDSAAATTADVYTAAIQSYRRRVRSHHG.

His-34 contacts 1D-myo-inositol 3-phosphate. UDP-N-acetyl-alpha-D-glucosamine contacts are provided by residues Gln-40–Pro-41 and Gly-48. 1D-myo-inositol 3-phosphate is bound by residues Asp-45–Asn-50, Lys-103, Tyr-136, Thr-160, and Arg-180. 3 residues coordinate UDP-N-acetyl-alpha-D-glucosamine: Arg-267, Lys-272, and Val-333. Positions 342, 343, and 345 each coordinate Mg(2+). Positions 355 and 363 each coordinate UDP-N-acetyl-alpha-D-glucosamine. Thr-369 contributes to the Mg(2+) binding site.

Belongs to the glycosyltransferase group 1 family. MshA subfamily. As to quaternary structure, homodimer.

It catalyses the reaction 1D-myo-inositol 3-phosphate + UDP-N-acetyl-alpha-D-glucosamine = 1D-myo-inositol 2-acetamido-2-deoxy-alpha-D-glucopyranoside 3-phosphate + UDP + H(+). Its function is as follows. Catalyzes the transfer of a N-acetyl-glucosamine moiety to 1D-myo-inositol 3-phosphate to produce 1D-myo-inositol 2-acetamido-2-deoxy-glucopyranoside 3-phosphate in the mycothiol biosynthesis pathway. This Streptomyces coelicolor (strain ATCC BAA-471 / A3(2) / M145) protein is D-inositol 3-phosphate glycosyltransferase.